The chain runs to 299 residues: MASLLRPTPLLSTPRKLTHSHLHTSISFPFQISTQRKPQKHLLNLCRSTPTPSQQKASQRKRTRYRKQYPGENIGITEEMRFVAMRLRNVNGKKLDLSEDKTDTEKEEEEEEEDDDDDDEVKEETWKPSKEGFLKYLVDSKLVFDTIERIVDESENVSYAYFRRTGLERCESIEKDLQWLREQDLVIPEPSNVGVSYAKYLEEQAGESAPLFLSHFYSIYFSHIAGGQVLVRQVSEKLLEGKELEFNRWEGDAQDLLKGVREKLNVLGEHWSRDEKNKCLKETAKAFKYMGQIVRLIIL.

Residues 1-15 (MASLLRPTPLLSTPR) are compositionally biased toward low complexity. Disordered stretches follow at residues 1–20 (MASLLRPTPLLSTPRKLTHS), 45–70 (LCRSTPTPSQQKASQRKRTRYRKQYP), and 96–126 (DLSEDKTDTEKEEEEEEEDDDDDDEVKEETW). Residues 1–83 (MASLLRPTPL…IGITEEMRFV (83 aa)) constitute a chloroplast transit peptide. Residues 46 to 57 (CRSTPTPSQQKA) show a composition bias toward polar residues. A compositionally biased stretch (basic residues) spans 58–67 (SQRKRTRYRK). A compositionally biased stretch (acidic residues) spans 105 to 122 (EKEEEEEEEDDDDDDEVK).

The protein belongs to the heme oxygenase family. As to expression, widely expressed at low levels.

It localises to the plastid. Its subcellular location is the chloroplast. Probable inactive heme oxygenase. Binds protoporphyrin IX, a precursor for both heme and chlorophyll biosynthesis. Plays a minor role in phytochrome assembly and photomorphogenesis. This Arabidopsis thaliana (Mouse-ear cress) protein is Probable inactive heme oxygenase 2, chloroplastic (HO2).